A 62-amino-acid chain; its full sequence is MLDPNLLDILVCPVSKAPLIYDEKTAELKCKASGLAYPVRDGIPVMLEEQARAMSDEEALSL.

It belongs to the UPF0434 family.

This is UPF0434 protein ABO_2103 from Alcanivorax borkumensis (strain ATCC 700651 / DSM 11573 / NCIMB 13689 / SK2).